An 89-amino-acid polypeptide reads, in one-letter code: Neurotoxin beta-KTx 12 (89 aa).

The signal sequence occupies residues 1 to 20 (MKQYIFFLALIVLVSTFAEA). The propeptide occupies 21–39 (GKKTEILDKVKKVFSKAKD). The 37-residue stretch at 53-89 (ELGCPFIDKWCEDHCESKKLVGKCENFDCSCVKLGGK) folds into the BetaSPN-type CS-alpha/beta domain. Cystine bridges form between Cys-56/Cys-76, Cys-63/Cys-81, and Cys-67/Cys-83.

This sequence belongs to the long chain scorpion toxin family. Class 2 subfamily. Expressed by the venom gland.

It localises to the secreted. Its function is as follows. Inhibits voltage-gated potassium channel. The chain is Neurotoxin beta-KTx 12 from Lychas mucronatus (Chinese swimming scorpion).